The chain runs to 735 residues: Diacylglycerol kinase alpha (735 aa).

EF-hand domains are found at residues 110-145 and 155-190; these read RPEDKLEFTFKLYDTDRNGILDSSEVDKIILQMMRV and ELRPILQEMMKEIDYDGSGSVSQAEWVRAGATTVPL. Ca(2+) is bound by residues aspartate 123, aspartate 125, asparagine 127, glutamate 134, aspartate 168, aspartate 170, serine 172, serine 174, and glutamate 179. 2 Phorbol-ester/DAG-type zinc fingers span residues 205–253 and 269–319; these read QHMW…ALPC and SHVW…GHEC. In terms of domain architecture, DAGKc spans 372–506; that stretch reads PNTHPLLVFV…MDRWSVEVIP (135 aa). Lysine 484 carries the N6-acetyllysine modification.

This sequence belongs to the eukaryotic diacylglycerol kinase family. In terms of assembly, monomer. In terms of tissue distribution, expressed in lymphocytes.

The protein resides in the cytoplasm. The protein localises to the cytosol. It carries out the reaction a 1,2-diacyl-sn-glycerol + ATP = a 1,2-diacyl-sn-glycero-3-phosphate + ADP + H(+). The enzyme catalyses a 1-O-alkyl-sn-glycerol + ATP = a 1-O-alkyl-sn-glycero-3-phosphate + ADP + H(+). It catalyses the reaction 1-O-alkyl-2-acyl-sn-glycerol + ATP = 1-O-alkyl-2-acyl-sn-glycero-3-phosphate + ADP + H(+). The catalysed reaction is 1,2-dihexadecanoyl-sn-glycerol + ATP = 1,2-dihexadecanoyl-sn-glycero-3-phosphate + ADP + H(+). It carries out the reaction 1-hexadecanoyl-2-(9Z-octadecenoyl)-sn-glycerol + ATP = 1-hexadecanoyl-2-(9Z-octadecenoyl)-sn-glycero-3-phosphate + ADP + H(+). The enzyme catalyses 2-(9Z-octadecenoyl)-glycerol + ATP = 2-(9Z-octadecenoyl)-sn-glycero-3-phosphate + ADP + H(+). It catalyses the reaction 1,2-di-(9Z-octadecenoyl)-sn-glycerol + ATP = 1,2-di-(9Z-octadecenoyl)-sn-glycero-3-phosphate + ADP + H(+). The catalysed reaction is 1-octadecanoyl-2-(5Z,8Z,11Z,14Z-eicosatetraenoyl)-sn-glycerol + ATP = 1-octadecanoyl-2-(5Z,8Z,11Z,14Z-eicosatetraenoyl)-sn-glycero-3-phosphate + ADP + H(+). It carries out the reaction 1,2-didecanoyl-sn-glycerol + ATP = 1,2-didecanoyl-sn-glycero-3-phosphate + ADP + H(+). The enzyme catalyses 1-O-hexadecyl-2-acetyl-sn-glycerol + ATP = 1-O-hexadecyl-2-acetyl-sn-glycero-3-phosphate + ADP + H(+). It catalyses the reaction 1-O-hexadecyl-2-(5Z,8Z,11Z,14Z-eicosatetraenoyl)-sn-glycerol + ATP = 1-O-hexadecyl-2-(5Z,8Z,11Z,14Z-eicosatetraenoyl)-sn-glycero-3-phosphate + ADP + H(+). The catalysed reaction is 1-O-hexadecyl-2-(9Z-octadecenoyl)-sn-glycerol + ATP = 1-O-hexadecyl-2-(9Z-octadecenoyl)-sn-glycero-3-phosphate + ADP + H(+). It carries out the reaction 1-O-hexadecyl-sn-glycerol + ATP = 1-O-hexadecyl-sn-glycero-3-phosphate + ADP + H(+). It participates in lipid metabolism; glycerolipid metabolism. Its activity is regulated as follows. Stimulated by calcium and phosphatidylserine. Its function is as follows. Diacylglycerol kinase that converts diacylglycerol/DAG into phosphatidic acid/phosphatidate/PA and regulates the respective levels of these two bioactive lipids. Thereby, acts as a central switch between the signaling pathways activated by these second messengers with different cellular targets and opposite effects in numerous biological processes. Also plays an important role in the biosynthesis of complex lipids. Can also phosphorylate 1-alkyl-2-acylglycerol in vitro as efficiently as diacylglycerol provided it contains an arachidonoyl group. Also involved in the production of alkyl-lysophosphatidic acid, another bioactive lipid, through the phosphorylation of 1-alkyl-2-acetyl glycerol. The sequence is that of Diacylglycerol kinase alpha (DGKA) from Homo sapiens (Human).